The primary structure comprises 163 residues: Nucleotide-binding protein HD_0358 (163 aa).

Belongs to the YajQ family.

In terms of biological role, nucleotide-binding protein. This Haemophilus ducreyi (strain 35000HP / ATCC 700724) protein is Nucleotide-binding protein HD_0358.